Reading from the N-terminus, the 291-residue chain is GCN5-related N-acetyltransferase 4, chloroplastic (291 aa).

The N-terminal 61 residues, 1-61 (MRSTPLGTTA…PSQINSGACN (61 aa)), are a transit peptide targeting the chloroplast. An N-acetyltransferase domain is found at 76–280 (IVVREARLED…RFTFMMKLVN (205 aa)). Acetyl-CoA-binding positions include 199-201 (VAV) and 207-212 (RKGIAK). At K217 the chain carries N6-acetyllysine. Acetyl-CoA-binding positions include 238–240 (NLG) and Y245. The Proton donor role is filled by Y245. An N6-acetyllysine mark is found at K254 and K265.

It belongs to the acetyltransferase family. GNAT subfamily. In terms of assembly, oligomer. Post-translationally, autoacetylated at K-217, K-254 and K-265. In terms of tissue distribution, expressed in green tissues.

Its subcellular location is the plastid. The protein resides in the chloroplast. The catalysed reaction is an N-terminal L-alpha-aminoacyl-[protein] + acetyl-CoA = N-terminal N(alpha)-acetyl-L-alpha-aminoacyl-[protein] + CoA + H(+). The enzyme catalyses L-lysyl-[protein] + acetyl-CoA = N(6)-acetyl-L-lysyl-[protein] + CoA + H(+). It catalyses the reaction N-terminal L-alanyl-[protein] + acetyl-CoA = N-terminal N(alpha)-acetyl-L-alanyl-[protein] + CoA + H(+). It carries out the reaction N-terminal L-seryl-[protein] + acetyl-CoA = N-terminal N(alpha)-acetyl-L-seryl-[protein] + CoA + H(+). The catalysed reaction is N-terminal L-threonyl-[protein] + acetyl-CoA = N-terminal N(alpha)-acetyl-L-threonyl-[protein] + CoA + H(+). The enzyme catalyses N-terminal L-methionyl-[protein] + acetyl-CoA = N-terminal N(alpha)-acetyl-L-methionyl-[protein] + CoA + H(+). It catalyses the reaction N-terminal L-valyl-[protein] + acetyl-CoA = N-terminal N(alpha)-acetyl-L-valyl-[protein] + CoA + H(+). It carries out the reaction N-terminal glycyl-[protein] + acetyl-CoA = N-terminal N(alpha)-acetylglycyl-[protein] + CoA + H(+). Protein acetyltransferase with dual specificity triggering both N-alpha-acetylation (NTA), with a large spectrum of modified N-termini, including methionine, alanine, serine, threonine and to a lower extent glycine and valine as substrates, and epsilon-lysine acetylation (KA) of several plastid proteins. The protein is GCN5-related N-acetyltransferase 4, chloroplastic of Arabidopsis thaliana (Mouse-ear cress).